The primary structure comprises 552 residues: HTH-type transcriptional regulator SgrR (552 aa).

Positions 1-116 constitute an HTH marR-type domain; the sequence is MPSGRLQQQF…LISHLGRSFR (116 aa). Residues 26 to 49 constitute a DNA-binding region (H-T-H motif); that stretch reads LNELADLLNCSRRHMRTLLNTMQA. The tract at residues 163 to 493 is solute-binding; that stretch reads ELEADIAHHW…RDWQGDAAQW (331 aa).

Activates the small RNA gene sgrS under glucose-phosphate stress conditions as well as yfdZ. Represses its own transcription under both stress and non-stress conditions. Might act as a sensor of the intracellular accumulation of phosphoglucose by binding these molecules in its C-terminal solute-binding domain. In Salmonella typhimurium (strain LT2 / SGSC1412 / ATCC 700720), this protein is HTH-type transcriptional regulator SgrR.